A 156-amino-acid polypeptide reads, in one-letter code: ATP synthase subunit b (156 aa).

Residues 7–27 traverse the membrane as a helical segment; that stretch reads LFVQAIVFLILVLFTMKFVWP.

Belongs to the ATPase B chain family. In terms of assembly, F-type ATPases have 2 components, F(1) - the catalytic core - and F(0) - the membrane proton channel. F(1) has five subunits: alpha(3), beta(3), gamma(1), delta(1), epsilon(1). F(0) has three main subunits: a(1), b(2) and c(10-14). The alpha and beta chains form an alternating ring which encloses part of the gamma chain. F(1) is attached to F(0) by a central stalk formed by the gamma and epsilon chains, while a peripheral stalk is formed by the delta and b chains.

It localises to the cell inner membrane. Functionally, f(1)F(0) ATP synthase produces ATP from ADP in the presence of a proton or sodium gradient. F-type ATPases consist of two structural domains, F(1) containing the extramembraneous catalytic core and F(0) containing the membrane proton channel, linked together by a central stalk and a peripheral stalk. During catalysis, ATP synthesis in the catalytic domain of F(1) is coupled via a rotary mechanism of the central stalk subunits to proton translocation. Component of the F(0) channel, it forms part of the peripheral stalk, linking F(1) to F(0). This chain is ATP synthase subunit b, found in Acidovorax sp. (strain JS42).